Reading from the N-terminus, the 124-residue chain is U33-theraphotoxin-Cg1a (124 aa).

Positions Met-1–Ala-17 are cleaved as a signal peptide. 5 cysteine pairs are disulfide-bonded: Cys-26–Cys-37, Cys-31–Cys-51, Cys-36–Cys-75, Cys-61–Cys-83, and Cys-77–Cys-94. Basic and acidic residues predominate over residues Arg-93–Gln-108. The interval Arg-93–Gly-124 is disordered. The span at Gly-109–Glu-118 shows a compositional bias: acidic residues.

Belongs to the neurotoxin 32 family. As to expression, expressed by the venom gland.

The protein localises to the secreted. This is U33-theraphotoxin-Cg1a from Chilobrachys guangxiensis (Chinese earth tiger tarantula).